Reading from the N-terminus, the 450-residue chain is Phosphoglucosamine mutase (450 aa).

Residue S101 is the Phosphoserine intermediate of the active site. 4 residues coordinate Mg(2+): S101, D241, D243, and D245. S101 carries the phosphoserine modification.

It belongs to the phosphohexose mutase family. Requires Mg(2+) as cofactor. Post-translationally, activated by phosphorylation.

It carries out the reaction alpha-D-glucosamine 1-phosphate = D-glucosamine 6-phosphate. Catalyzes the conversion of glucosamine-6-phosphate to glucosamine-1-phosphate. The protein is Phosphoglucosamine mutase of Lysinibacillus sphaericus (strain C3-41).